The primary structure comprises 91 residues: Small ribosomal subunit protein uS19 (91 aa).

The protein belongs to the universal ribosomal protein uS19 family.

Functionally, protein S19 forms a complex with S13 that binds strongly to the 16S ribosomal RNA. The protein is Small ribosomal subunit protein uS19 (rpsS) of Mycoplasmopsis pulmonis (strain UAB CTIP) (Mycoplasma pulmonis).